We begin with the raw amino-acid sequence, 424 residues long: Serine--tRNA ligase (424 aa).

Residue 230–232 (TAE) coordinates L-serine. An ATP-binding site is contributed by 261–263 (RSE). Residue Glu-284 participates in L-serine binding. Position 348-351 (348-351 (EISS)) interacts with ATP. An L-serine-binding site is contributed by Ser-384.

This sequence belongs to the class-II aminoacyl-tRNA synthetase family. Type-1 seryl-tRNA synthetase subfamily. In terms of assembly, homodimer. The tRNA molecule binds across the dimer.

It localises to the cytoplasm. It carries out the reaction tRNA(Ser) + L-serine + ATP = L-seryl-tRNA(Ser) + AMP + diphosphate + H(+). It catalyses the reaction tRNA(Sec) + L-serine + ATP = L-seryl-tRNA(Sec) + AMP + diphosphate + H(+). It participates in aminoacyl-tRNA biosynthesis; selenocysteinyl-tRNA(Sec) biosynthesis; L-seryl-tRNA(Sec) from L-serine and tRNA(Sec): step 1/1. In terms of biological role, catalyzes the attachment of serine to tRNA(Ser). Is also able to aminoacylate tRNA(Sec) with serine, to form the misacylated tRNA L-seryl-tRNA(Sec), which will be further converted into selenocysteinyl-tRNA(Sec). This is Serine--tRNA ligase from Nitratidesulfovibrio vulgaris (strain ATCC 29579 / DSM 644 / CCUG 34227 / NCIMB 8303 / VKM B-1760 / Hildenborough) (Desulfovibrio vulgaris).